The primary structure comprises 405 residues: Tryptophan synthase beta chain (405 aa).

Lys98 carries the N6-(pyridoxal phosphate)lysine modification.

It belongs to the TrpB family. Tetramer of two alpha and two beta chains. It depends on pyridoxal 5'-phosphate as a cofactor.

It catalyses the reaction (1S,2R)-1-C-(indol-3-yl)glycerol 3-phosphate + L-serine = D-glyceraldehyde 3-phosphate + L-tryptophan + H2O. It participates in amino-acid biosynthesis; L-tryptophan biosynthesis; L-tryptophan from chorismate: step 5/5. Functionally, the beta subunit is responsible for the synthesis of L-tryptophan from indole and L-serine. This Methylococcus capsulatus (strain ATCC 33009 / NCIMB 11132 / Bath) protein is Tryptophan synthase beta chain.